We begin with the raw amino-acid sequence, 128 residues long: MEIINAVGRRKTSIARIYLSNGKGDISINKTSLEKYFPSEAIITLVKQPLQQIEAIDQYDIKINVKGGGFKGQAEAVRLGIARALCEVNPSFRPSLKKEGFLTRDSRMVERKKYGHKKARKSFQFSKR.

It belongs to the universal ribosomal protein uS9 family.

The chain is Small ribosomal subunit protein uS9 from Amoebophilus asiaticus (strain 5a2).